An 898-amino-acid polypeptide reads, in one-letter code: Aconitate hydratase 1 (898 aa).

Position 2 is an N-acetylalanine (Ala-2). Residues Gln-90 and 209 to 211 contribute to the substrate site; that span reads DSH. Residues Cys-441, Cys-507, and Cys-510 each contribute to the [4Fe-4S] cluster site. Substrate contacts are provided by residues Arg-540, Arg-545, Arg-703, and 784–785; that span reads SR.

Belongs to the aconitase/IPM isomerase family. In terms of assembly, monomer. Requires [4Fe-4S] cluster as cofactor. Mostly expressed in roots, stems and leaves, also present in stems and flowers.

Its subcellular location is the cytoplasm. It is found in the mitochondrion. The enzyme catalyses citrate = D-threo-isocitrate. The protein operates within carbohydrate metabolism; tricarboxylic acid cycle; isocitrate from oxaloacetate: step 2/2. Functionally, catalyzes the isomerization of citrate to isocitrate via cis-aconitate. Contributes to oxidative stress tolerance. May have a role in respiration. In Arabidopsis thaliana (Mouse-ear cress), this protein is Aconitate hydratase 1.